A 1217-amino-acid chain; its full sequence is MAILKRGARNKTHQEPAKRGGNNIKKAAFETSKKKEVGVSDLTLLTSISDESINDNLKKRFLNGTIYTYIGHVLISVNPFRDLGIYTDAIMKSYQGKNRLEVPPHVYAISEAMYYNLKAYNENQCVIISGESGAGKTEAAKKIMEYIAATSSTHSESIGKIKDMVLATNPLLESFGCAKTLRNNNSSRHGKYLEIRFNSQFEPCAGNITNYLLEKQRVVGQITNERNFHIFYQFTKGASDNYRQTFGVQLPEQYVYTSASKCTSVDTIDDVKDFEATIKAMQVIGLAQEEQDQIFRMLAAILWIGNISFIENEEGNAQVRDTSVTDFVAYLLQVDSQSLIKALVERIVETNHGSRRGSVYHVPLNIVQATAVRDALAKAIYNNLFEWIVDRVNKSLHAYPGADKSIGILDIYGFEIFEHNSFEQICINYVNEKLQQIFIQLTLKSEQDTYAREKIQWTPIKYFDNKVVCDLIEAKRPPGIFAAMNDSVATAHADSSAADQAFAQRLSLFSSNPHFEQRQNKFVIKHYAGDVTYDVLGMTDKNKDQLQKDLVELVGTTTNAFLTTLFPNQVDKDNKRRPPTAGDKIIKSANELVETLSKAQPSYIRTIKPNQTKSPNDYDDHQVLHQVKYLGLQENVRIRRAGFAYRQGFEKFVERFYLLSPRCSYAGDYTWTGDILEAVRLILQDALIPEKEYQLGVTQVFIKTPETLFALENMRDKFWHNMAARIQRAWRRYLQRRIDAAVKIQRTIKERKEGNKFEKLRDYGTSLLGNKKERRSMSLLGYRAFMGDYLSCNESKSNGSYIKRQAGISEKVVFSFHGEALHSKFGRSAQRLKKTFILSPTTLYIIGQVRVQNAMQYTADYKINVNSILQLNMTNLQDDWVGIVLANSSMPDPLINLSFKTELITHLKTLNSKIQVKVGPTLEYQKKPGKMHSVKCQVSDTAPKYGDVYKSSTIFVRRGNPANSKSKKKPRKKSSGMSAPTTQSSKTLAPPRMSSNNQNTTVSQSLNGGMNVKPQTPASRSAKKPAPPPPGSKKPAPQPMAKKPAPHPTPQAQMQTQTQIPASQSSATQSSIPPPPPPPPSKTSEPQFEAAYDFPGSGNPSELPLMKGDIVYITKEEPSGWSLAKTLDGSKSGWVPTAYMVKHEGAKAPPPAPAVTASQPAIQNQSQPASAQTVAATSQVPASFGDGLVSALAARANKMRVESDEEAAASSDNDDDW.

Positions 1–11 (MAILKRGARNK) are enriched in basic residues. Residues 1–24 (MAILKRGARNKTHQEPAKRGGNNI) are disordered. Positions 37-716 (VGVSDLTLLT…TLFALENMRD (680 aa)) constitute a Myosin motor domain. 130–137 (GESGAGKT) is a binding site for ATP. Serine 358 carries the phosphoserine modification. Residues 405–487 (SIGILDIYGF…PGIFAAMNDS (83 aa)) are actin-binding. 2 consecutive IQ domains span residues 720 to 740 (HNMA…RIDA) and 741 to 766 (AVKI…YGTS). The TH1 domain maps to 772 to 962 (KERRSMSLLG…TIFVRRGNPA (191 aa)). Disordered regions lie at residues 956-1102 (VRRG…NPSE), 1145-1174 (GAKA…AQTV), and 1197-1217 (NKMR…DDDW). Positions 965–974 (KSKKKPRKKS) are enriched in basic residues. Positions 976–987 (GMSAPTTQSSKT) are enriched in polar residues. Residues 994–1007 (SSNNQNTTVSQSLN) show a composition bias toward low complexity. Positions 1025–1038 (PAPPPPGSKKPAPQ) are enriched in pro residues. Low complexity predominate over residues 1050–1071 (PQAQMQTQTQIPASQSSATQSS). Residues 1072 to 1081 (IPPPPPPPPS) show a composition bias toward pro residues. The SH3 domain maps to 1083–1145 (TSEPQFEAAY…PTAYMVKHEG (63 aa)). The segment covering 1162-1174 (IQNQSQPASAQTV) has biased composition (polar residues). Residues 1203–1217 (SDEEAAASSDNDDDW) show a composition bias toward acidic residues.

The protein belongs to the TRAFAC class myosin-kinesin ATPase superfamily. Myosin family. In terms of processing, phosphorylation of the TEDS site (Ser-358) is required for the polarization of the actin cytoskeleton. Phosphorylation probably activates the myosin-I ATPase activity.

It localises to the cytoplasm. The protein localises to the cytoskeleton. Its subcellular location is the actin patch. Type-I myosin implicated in the organization of the actin cytoskeleton. Required for proper actin cytoskeleton polarization. At the cell cortex, assembles in patch-like structures together with proteins from the actin-polymerizing machinery and promotes actin assembly. Functions as actin nucleation-promoting factor (NPF) for the Arp2/3 complex. This Candida glabrata (strain ATCC 2001 / BCRC 20586 / JCM 3761 / NBRC 0622 / NRRL Y-65 / CBS 138) (Yeast) protein is Myosin-5 (MYO5).